We begin with the raw amino-acid sequence, 575 residues long: Transcription factor COE2 (575 aa).

Residues 62-65 (RKSN) form an interaction with DNA region. The segment at 150-169 (CRVLLTHEVMCSRCCEKKSC) adopts a C5-type zinc-finger fold. Interaction with DNA regions lie at residues 196–203 (NCLKTAGN) and 235–238 (NNSK). The IPT/TIG domain occupies 253-336 (PCIKAISPSE…KGAPGRFIYT (84 aa)). The span at 441–453 (STQGNNQGYIRNT) shows a compositional bias: polar residues. Residues 441–479 (STQGNNQGYIRNTSSISPRGYSSSSTPQQSNYSTSSNSM) form a disordered region. The span at 454–479 (SSISPRGYSSSSTPQQSNYSTSSNSM) shows a compositional bias: low complexity.

It belongs to the COE family. Forms either a homodimer or a heterodimer with a related family member. Interacts with SIX1. In adult expressed in olfactory epithelium and at a much lower level in Purkinje cells of the cerebellum. In embryo expressed in epithalamus, in cells near the ventricular zone of mesencephalon and on the ventral surface of rhombencephalon, in the developing vomeronasal organ, at a lower level in developing spinal cord. Not expressed in developing retina, inner ear, dorsal root ganglia, trigeminal ganglia and glossopharyngeal ganglia.

It localises to the nucleus. Transcription factor that, in osteoblasts, activates the decoy receptor for RANKL, TNFRSF11B, which in turn regulates osteoclast differentiation. Acts in synergy with the Wnt-responsive LEF1/CTNNB1 pathway. Recognizes variations of the palindromic sequence 5'-ATTCCCNNGGGAATT-3'. This is Transcription factor COE2 (Ebf2) from Mus musculus (Mouse).